Consider the following 147-residue polypeptide: Large ribosomal subunit protein uL15 (147 aa).

The segment covering 1 to 20 (MTMHLNDLKPADGARTERTR) has biased composition (basic and acidic residues). A disordered region spans residues 1 to 64 (MTMHLNDLKP…GGQTPMQRRL (64 aa)). Residues 23-33 (RGIGSGLGKTC) are compositionally biased toward gly residues. Over residues 34–47 (GRGHKGSFARKGGG) the composition is skewed to basic residues.

It belongs to the universal ribosomal protein uL15 family. As to quaternary structure, part of the 50S ribosomal subunit.

Functionally, binds to the 23S rRNA. This chain is Large ribosomal subunit protein uL15, found in Xanthomonas campestris pv. campestris (strain 8004).